The primary structure comprises 56 residues: Genome polyprotein (56 aa).

Positions 1–30 (ETMLDRIASGDLESSVDDPRSAEDKRFESH) are disordered. The segment covering 17 to 30 (DDPRSAEDKRFESH) has biased composition (basic and acidic residues).

Belongs to the picornaviridae polyprotein family. As to quaternary structure, homopentamer. Homooligomer. Interacts with capsid protein VP2. Interacts with capsid protein VP3. Post-translationally, specific enzymatic cleavages by viral protease in vivo yield a variety of precursors and mature proteins. Polyprotein processing intermediates are produced, such as P1-2A which is a functional precursor of the structural proteins, VP0 which is a VP4-VP2 precursor, VP1-2A precursor, 3ABC precursor which is a stable and catalytically active precursor of 3A, 3B and 3C proteins, 3AB and 3CD precursors. The assembly signal 2A is removed from VP1-2A by a host protease, possibly host Cathepsin L. This cleavage occurs over a region of 3 amino-acids probably generating VP1 proteins with heterogeneous C-termini. The assembly signal 2A is removed from VP1-2A by a host protease, possibly host Cathepsin L in naked virions. This cleavage does not occur in enveloped virions. This cleavage occurs over a region of 3 amino-acids probably generating VP1 proteins with heterogeneous C-termini.

It localises to the virion. The protein resides in the host endosome. The protein localises to the host multivesicular body. Its function is as follows. Capsid proteins VP1, VP2, and VP3 form a closed capsid enclosing the viral positive strand RNA genome. All these proteins contain a beta-sheet structure called beta-barrel jelly roll. Together they form an icosahedral capsid (T=3) composed of 60 copies of each VP1, VP2, and VP3, with a diameter of approximately 300 Angstroms. VP1 is situated at the 12 fivefold axes, whereas VP2 and VP3 are located at the quasi-sixfold axes. The naked capsid interacts with the host receptor HAVCR1 to provide virion attachment to and probably entry into the target cell. In terms of biological role, precursor component of immature procapsids that corresponds to an extended form of the structural protein VP1. After maturation, possibly by the host Cathepsin L, the assembly signal 2A is cleaved to give rise to the mature VP1 protein. The polypeptide is Genome polyprotein (Callithrix (Owl-faced monkey)).